Here is an 85-residue protein sequence, read N- to C-terminus: Toxin Cll6 (85 aa).

Residues 1–19 form the signal peptide; the sequence is MNSLLMIIGCLVLIGTVWT. Residues 20 to 83 enclose the LCN-type CS-alpha/beta domain; it reads KEGYLVNMKT…TWPLPGKSCS (64 aa). 4 disulfide bridges follow: Cys31/Cys82, Cys35/Cys58, Cys44/Cys63, and Cys48/Cys65. At Ser83 the chain carries Serine amide.

It belongs to the long (4 C-C) scorpion toxin superfamily. Sodium channel inhibitor family. Beta subfamily. As to expression, expressed by the venom gland.

The protein resides in the secreted. In terms of biological role, beta toxins bind voltage-independently at site-4 of sodium channels (Nav) and shift the voltage of activation toward more negative potentials thereby affecting sodium channel activation and promoting spontaneous and repetitive firing. The chain is Toxin Cll6 from Centruroides limpidus (Mexican scorpion).